Here is a 111-residue protein sequence, read N- to C-terminus: Ferredoxin, 2Fe-2S (111 aa).

Residues Cys-10, Cys-23, Cys-56, and Cys-60 each coordinate [2Fe-2S] cluster.

As to quaternary structure, homodimer in solution. The cofactor is [2Fe-2S] cluster.

Ferredoxins are iron-sulfur proteins that transfer electrons in a wide variety of metabolic reactions. This Aquifex aeolicus (strain VF5) protein is Ferredoxin, 2Fe-2S (fdx4).